Reading from the N-terminus, the 180-residue chain is Acireductone dioxygenase (180 aa).

Fe(2+)-binding residues include His-97, His-99, Glu-103, and His-141. The Ni(2+) site is built by His-97, His-99, Glu-103, and His-141.

This sequence belongs to the acireductone dioxygenase (ARD) family. In terms of assembly, monomer. Fe(2+) is required as a cofactor. The cofactor is Mg(2+). It depends on Ni(2+) as a cofactor. Mn(2+) serves as cofactor. Requires Co(2+) as cofactor.

It carries out the reaction 1,2-dihydroxy-5-(methylsulfanyl)pent-1-en-3-one + O2 = 3-(methylsulfanyl)propanoate + CO + formate + 2 H(+). It catalyses the reaction 1,2-dihydroxy-5-(methylsulfanyl)pent-1-en-3-one + O2 = 4-methylsulfanyl-2-oxobutanoate + formate + 2 H(+). It participates in amino-acid biosynthesis; L-methionine biosynthesis via salvage pathway; L-methionine from S-methyl-5-thio-alpha-D-ribose 1-phosphate: step 5/6. Catalyzes 2 different reactions between oxygen and the acireductone 1,2-dihydroxy-3-keto-5-methylthiopentene (DHK-MTPene) depending upon the metal bound in the active site. Fe-containing acireductone dioxygenase (Fe-ARD) produces formate and 2-keto-4-methylthiobutyrate (KMTB), the alpha-ketoacid precursor of methionine in the methionine recycle pathway. Ni-containing acireductone dioxygenase (Ni-ARD) produces methylthiopropionate, carbon monoxide and formate, and does not lie on the methionine recycle pathway. The sequence is that of Acireductone dioxygenase (mtnD) from Klebsiella oxytoca.